We begin with the raw amino-acid sequence, 313 residues long: Protoheme IX farnesyltransferase (313 aa).

8 consecutive transmembrane segments (helical) span residues 32-52, 53-73, 120-140, 153-173, 180-200, 226-246, 248-268, and 284-304; these read VMSL…GDFH, PVLA…AGAL, VLVN…YVVI, IVIG…AVTG, LLLF…LALF, ILLY…LGYF, AVYG…AIRV, and LFKF…IEVV.

The protein belongs to the UbiA prenyltransferase family. Protoheme IX farnesyltransferase subfamily.

It is found in the cell inner membrane. It carries out the reaction heme b + (2E,6E)-farnesyl diphosphate + H2O = Fe(II)-heme o + diphosphate. The protein operates within porphyrin-containing compound metabolism; heme O biosynthesis; heme O from protoheme: step 1/1. Converts heme B (protoheme IX) to heme O by substitution of the vinyl group on carbon 2 of heme B porphyrin ring with a hydroxyethyl farnesyl side group. In Rhodopseudomonas palustris (strain BisB5), this protein is Protoheme IX farnesyltransferase.